Consider the following 451-residue polypeptide: Probable glycine dehydrogenase (decarboxylating) subunit 1 (451 aa).

This sequence belongs to the GcvP family. N-terminal subunit subfamily. In terms of assembly, the glycine cleavage system is composed of four proteins: P, T, L and H. In this organism, the P 'protein' is a heterodimer of two subunits.

It catalyses the reaction N(6)-[(R)-lipoyl]-L-lysyl-[glycine-cleavage complex H protein] + glycine + H(+) = N(6)-[(R)-S(8)-aminomethyldihydrolipoyl]-L-lysyl-[glycine-cleavage complex H protein] + CO2. Functionally, the glycine cleavage system catalyzes the degradation of glycine. The P protein binds the alpha-amino group of glycine through its pyridoxal phosphate cofactor; CO(2) is released and the remaining methylamine moiety is then transferred to the lipoamide cofactor of the H protein. This chain is Probable glycine dehydrogenase (decarboxylating) subunit 1, found in Staphylococcus aureus (strain MSSA476).